A 218-amino-acid chain; its full sequence is Eukaryotic translation initiation factor 4E-1 (218 aa).

Residues 1-11 (MQTEQPPKESQ) are compositionally biased toward basic and acidic residues. Disordered regions lie at residues 1-20 (MQTE…SEPQ) and 198-218 (FSAH…RMSV). Positions 206-218 (KSGSTRAKTRMSV) are enriched in polar residues.

It belongs to the eukaryotic initiation factor 4E family. In terms of assembly, eIF4F is a multi-subunit complex, the composition of which varies with external and internal environmental conditions. It is composed of at least eIF4A, eIF4E and eIF4G. eIF4E is also known to interact with other partners.

Recognizes and binds the 7-methylguanosine-containing mRNA cap during an early step in the initiation of protein synthesis and facilitates ribosome binding by inducing the unwinding of the mRNAs secondary structures. The polypeptide is Eukaryotic translation initiation factor 4E-1 (tif451) (Schizosaccharomyces pombe (strain 972 / ATCC 24843) (Fission yeast)).